A 196-amino-acid polypeptide reads, in one-letter code: Ribosome maturation factor RimP (196 aa).

Residues 164 to 196 (LAPQKPNKPGPKKTGHEKKKPSNESAAGKPRAE) are disordered. The span at 173–182 (GPKKTGHEKK) shows a compositional bias: basic residues.

The protein belongs to the RimP family.

It is found in the cytoplasm. Functionally, required for maturation of 30S ribosomal subunits. This Xanthomonas oryzae pv. oryzae (strain MAFF 311018) protein is Ribosome maturation factor RimP.